A 217-amino-acid polypeptide reads, in one-letter code: Large ribosomal subunit protein uL29m (217 aa).

Belongs to the universal ribosomal protein uL29 family. As to quaternary structure, component of the mitochondrial large ribosomal subunit. Mature mitochondrial ribosomes consist of a small (37S) and a large (54S) subunit. The 37S subunit contains at least 33 different proteins and 1 molecule of RNA (15S). The 54S subunit contains at least 45 different proteins and 1 molecule of RNA (21S).

It localises to the mitochondrion. The sequence is that of Large ribosomal subunit protein uL29m (mrpl4) from Aspergillus fumigatus (strain ATCC MYA-4609 / CBS 101355 / FGSC A1100 / Af293) (Neosartorya fumigata).